A 190-amino-acid polypeptide reads, in one-letter code: Nucleoside triphosphate pyrophosphatase (190 aa).

Asp69 acts as the Proton acceptor in catalysis.

This sequence belongs to the Maf family. Requires a divalent metal cation as cofactor.

The protein localises to the cytoplasm. It carries out the reaction a ribonucleoside 5'-triphosphate + H2O = a ribonucleoside 5'-phosphate + diphosphate + H(+). The enzyme catalyses a 2'-deoxyribonucleoside 5'-triphosphate + H2O = a 2'-deoxyribonucleoside 5'-phosphate + diphosphate + H(+). In terms of biological role, nucleoside triphosphate pyrophosphatase. May have a dual role in cell division arrest and in preventing the incorporation of modified nucleotides into cellular nucleic acids. The polypeptide is Nucleoside triphosphate pyrophosphatase (Helicobacter pylori (strain ATCC 700392 / 26695) (Campylobacter pylori)).